The following is a 406-amino-acid chain: Transposase for insertion sequence element IS1001 (406 aa).

This sequence belongs to the transposase 12 family.

Functionally, involved in the transposition of the insertion sequence. In Bordetella parapertussis, this protein is Transposase for insertion sequence element IS1001 (tnpA).